A 511-amino-acid chain; its full sequence is Cytochrome P450 monooxygenase PUL2 (511 aa).

A helical membrane pass occupies residues 14–34 (WMAFVYFTPVLFVVLYLLKEW). 3 N-linked (GlcNAc...) asparagine glycosylation sites follow: N116, N141, and N442. C462 provides a ligand contact to heme.

It belongs to the cytochrome P450 family. It depends on heme as a cofactor.

Its subcellular location is the membrane. Its pathway is siderophore biosynthesis. In terms of biological role, cytochrome P450 monooxygenase; part of the PUL gene cluster that mediates the formation of pulcherrimin, a red iron-containing pigment composed of two cyclized and modified leucine molecules that acts as a siderophore, a chelator that binds iron outside the cell for subsequent uptake. Two leucine molecules are cyclized via a cyclodipeptide synthase, and the resulting diketopiperazine is oxidized by a cytochrome P450 monooxygenase to generate pulcherriminic acid (PA), which can then spontaneously bind iron to form pulcherrimin. The probable cyclodipeptide synthase PUL1 and the cytochrome P450 monooxygenase PUL2 encode the enzymes responsible for the two-step pulcherrimin biosynthesis pathway. The protein is Cytochrome P450 monooxygenase PUL2 of Kluyveromyces lactis (strain ATCC 8585 / CBS 2359 / DSM 70799 / NBRC 1267 / NRRL Y-1140 / WM37) (Yeast).